A 604-amino-acid polypeptide reads, in one-letter code: NADP-dependent malic enzyme, mitochondrial (604 aa).

Residues 28–50 are disordered; sequence SAPAQGCHSKSGPPRPVPLKKRG. Residue Tyr137 is the Proton donor of the active site. Residue Arg190 coordinates NADP(+). Lys208 serves as the catalytic Proton acceptor. A divalent metal cation contacts are provided by Glu280, Asp281, and Asp304. Asp304 lines the NADP(+) pocket. Ser371 carries the phosphoserine modification. Asn443 contributes to the NADP(+) binding site.

It belongs to the malic enzymes family. Requires Mg(2+) as cofactor. The cofactor is Mn(2+).

The protein localises to the mitochondrion matrix. The enzyme catalyses (S)-malate + NADP(+) = pyruvate + CO2 + NADPH. It catalyses the reaction oxaloacetate + H(+) = pyruvate + CO2. This chain is NADP-dependent malic enzyme, mitochondrial (Me3), found in Mus musculus (Mouse).